Reading from the N-terminus, the 128-residue chain is MAQEFSRTERVRHQLQREIAMILQREIKDPRVSMVTVSDVEVSRDLAYAKVFVTFFQDDPEQTKQALKVLNEASGFIRSLLGKRIKARIVPQLRFQHDASLNEGIRMGKLVAEARERDKKSSENSGDD.

It belongs to the RbfA family. Monomer. Binds 30S ribosomal subunits, but not 50S ribosomal subunits or 70S ribosomes.

It is found in the cytoplasm. Functionally, one of several proteins that assist in the late maturation steps of the functional core of the 30S ribosomal subunit. Associates with free 30S ribosomal subunits (but not with 30S subunits that are part of 70S ribosomes or polysomes). Required for efficient processing of 16S rRNA. May interact with the 5'-terminal helix region of 16S rRNA. This Idiomarina loihiensis (strain ATCC BAA-735 / DSM 15497 / L2-TR) protein is Ribosome-binding factor A.